A 189-amino-acid polypeptide reads, in one-letter code: dCTP deaminase (189 aa).

DCTP-binding positions include 112–117, 136–138, Gln-157, Tyr-171, and Gln-181; these read KSTYAR and TLE. Glu-138 acts as the Proton donor/acceptor in catalysis.

The protein belongs to the dCTP deaminase family. Homotrimer.

The catalysed reaction is dCTP + H2O + H(+) = dUTP + NH4(+). It functions in the pathway pyrimidine metabolism; dUMP biosynthesis; dUMP from dCTP (dUTP route): step 1/2. Functionally, catalyzes the deamination of dCTP to dUTP. This Burkholderia orbicola (strain MC0-3) protein is dCTP deaminase.